The chain runs to 185 residues: Ribosome-recycling factor (185 aa).

Belongs to the RRF family.

It localises to the cytoplasm. Functionally, responsible for the release of ribosomes from messenger RNA at the termination of protein biosynthesis. May increase the efficiency of translation by recycling ribosomes from one round of translation to another. The sequence is that of Ribosome-recycling factor from Clostridium novyi (strain NT).